The following is a 420-amino-acid chain: Serine hydroxymethyltransferase (420 aa).

(6S)-5,6,7,8-tetrahydrofolate is bound by residues L117 and 121-123 (GHL). The residue at position 226 (K226) is an N6-(pyridoxal phosphate)lysine.

Belongs to the SHMT family. Homodimer. The cofactor is pyridoxal 5'-phosphate.

The protein resides in the cytoplasm. It carries out the reaction (6R)-5,10-methylene-5,6,7,8-tetrahydrofolate + glycine + H2O = (6S)-5,6,7,8-tetrahydrofolate + L-serine. It participates in one-carbon metabolism; tetrahydrofolate interconversion. It functions in the pathway amino-acid biosynthesis; glycine biosynthesis; glycine from L-serine: step 1/1. Its function is as follows. Catalyzes the reversible interconversion of serine and glycine with tetrahydrofolate (THF) serving as the one-carbon carrier. This reaction serves as the major source of one-carbon groups required for the biosynthesis of purines, thymidylate, methionine, and other important biomolecules. Also exhibits THF-independent aldolase activity toward beta-hydroxyamino acids, producing glycine and aldehydes, via a retro-aldol mechanism. The polypeptide is Serine hydroxymethyltransferase (Rhodopirellula baltica (strain DSM 10527 / NCIMB 13988 / SH1)).